Consider the following 298-residue polypeptide: N-acetylmuramic acid 6-phosphate etherase 2 (298 aa).

The SIS domain occupies 51 to 214 (IVSRFEQGGR…STAAMVRLGR (164 aa)). Catalysis depends on Glu79, which acts as the Proton donor. The active site involves Glu110.

It belongs to the GCKR-like family. MurNAc-6-P etherase subfamily. In terms of assembly, homodimer.

The catalysed reaction is N-acetyl-D-muramate 6-phosphate + H2O = N-acetyl-D-glucosamine 6-phosphate + (R)-lactate. Its pathway is amino-sugar metabolism; N-acetylmuramate degradation. Its function is as follows. Specifically catalyzes the cleavage of the D-lactyl ether substituent of MurNAc 6-phosphate, producing GlcNAc 6-phosphate and D-lactate. The polypeptide is N-acetylmuramic acid 6-phosphate etherase 2 (Bacillus licheniformis (strain ATCC 14580 / DSM 13 / JCM 2505 / CCUG 7422 / NBRC 12200 / NCIMB 9375 / NCTC 10341 / NRRL NRS-1264 / Gibson 46)).